The chain runs to 138 residues: Large ribosomal subunit protein uL16 (138 aa).

This sequence belongs to the universal ribosomal protein uL16 family. In terms of assembly, part of the 50S ribosomal subunit.

Its function is as follows. Binds 23S rRNA and is also seen to make contacts with the A and possibly P site tRNAs. This chain is Large ribosomal subunit protein uL16, found in Chlamydia pneumoniae (Chlamydophila pneumoniae).